The following is an 84-amino-acid chain: Esculentin-1ISb (84 aa).

Residues 1–22 form the signal peptide; it reads MFTLKKPLLLIVLLGIISLSLC. Positions 23 to 36 are cleaved as a propeptide — removed in mature form; that stretch reads EQERAADEDEGTKI. Cysteine 78 and cysteine 84 form a disulfide bridge.

In terms of tissue distribution, expressed by the skin glands.

It localises to the secreted. Its function is as follows. Has antimicrobial activity against Gram-negative bacterium E.coli ATCC 8739 (MIC=3.1 ug), against Gram positive bacteria S.aureus ATCC 6538 (MIC=3.1 ug), methicillin-resistant S.aureus ATCC 43300 (MIC=12.5 ug), B.subtilis ATCC 6633 (MIC=12.5 ug) and against fungus C.albicans ATCC 90028 (MIC=50 ug). This is Esculentin-1ISb from Odorrana ishikawae (Ishikawa's frog).